Reading from the N-terminus, the 150-residue chain is Arginine repressor (150 aa).

Belongs to the ArgR family.

Its subcellular location is the cytoplasm. It participates in amino-acid biosynthesis; L-arginine biosynthesis [regulation]. Functionally, regulates arginine biosynthesis genes. In Clostridium botulinum (strain Okra / Type B1), this protein is Arginine repressor.